We begin with the raw amino-acid sequence, 102 residues long: Urease subunit beta (102 aa).

This sequence belongs to the urease beta subunit family. Heterotrimer of UreA (gamma), UreB (beta) and UreC (alpha) subunits. Three heterotrimers associate to form the active enzyme.

The protein localises to the cytoplasm. It carries out the reaction urea + 2 H2O + H(+) = hydrogencarbonate + 2 NH4(+). Its pathway is nitrogen metabolism; urea degradation; CO(2) and NH(3) from urea (urease route): step 1/1. This chain is Urease subunit beta, found in Clostridium perfringens.